A 232-amino-acid chain; its full sequence is Small ribosomal subunit protein uS3 (232 aa).

The region spanning 39 to 107 is the KH type-2 domain; that stretch reads VRQFLTSELK…PAQINIAEVR (69 aa). The segment at 213 to 232 is disordered; the sequence is AANAVEPKGDKPKKQRKGRK.

It belongs to the universal ribosomal protein uS3 family. Part of the 30S ribosomal subunit. Forms a tight complex with proteins S10 and S14.

Its function is as follows. Binds the lower part of the 30S subunit head. Binds mRNA in the 70S ribosome, positioning it for translation. The sequence is that of Small ribosomal subunit protein uS3 from Vibrio parahaemolyticus serotype O3:K6 (strain RIMD 2210633).